Reading from the N-terminus, the 175-residue chain is Inorganic pyrophosphatase (175 aa).

Substrate is bound by residues K30, R44, and Y56. Positions 66, 71, and 103 each coordinate Mg(2+). Y142 serves as a coordination point for substrate.

This sequence belongs to the PPase family. As to quaternary structure, homohexamer. Mg(2+) is required as a cofactor.

The protein resides in the cytoplasm. It carries out the reaction diphosphate + H2O = 2 phosphate + H(+). Catalyzes the hydrolysis of inorganic pyrophosphate (PPi) forming two phosphate ions. This is Inorganic pyrophosphatase from Pseudomonas aeruginosa (strain ATCC 15692 / DSM 22644 / CIP 104116 / JCM 14847 / LMG 12228 / 1C / PRS 101 / PAO1).